A 113-amino-acid chain; its full sequence is Meiotically up-regulated gene 98 protein, mitochondrial (113 aa).

It is found in the mitochondrion. Has a role in meiosis. The protein is Meiotically up-regulated gene 98 protein, mitochondrial (mug98) of Schizosaccharomyces pombe (strain 972 / ATCC 24843) (Fission yeast).